The following is a 1556-amino-acid chain: Pentafunctional AROM polypeptide (1556 aa).

The tract at residues 1 to 387 is 3-dehydroquinate synthase; the sequence is MFAEGQIQKV…HEQKASSVAD (387 aa). NAD(+) is bound by residues 46–48, 84–87, 115–117, and Asp120; these read DTN, ETSK, and GGV. Position 131 (Arg131) interacts with 7-phospho-2-dehydro-3-deoxy-D-arabino-heptonate. 140-141 is a binding site for NAD(+); that stretch reads TT. 7-phospho-2-dehydro-3-deoxy-D-arabino-heptonate contacts are provided by Asp147 and Lys153. Residue Lys162 coordinates NAD(+). 7-phospho-2-dehydro-3-deoxy-D-arabino-heptonate is bound at residue Asn163. Residues 180 to 183 and Asn191 contribute to the NAD(+) site; that span reads FLET. Glu195 contacts Zn(2+). Residues 195–198 and Lys253 contribute to the 7-phospho-2-dehydro-3-deoxy-D-arabino-heptonate site; that span reads EVIK. The active-site Proton acceptor; for 3-dehydroquinate synthase activity is Glu263. Residues 267–271 and His274 each bind 7-phospho-2-dehydro-3-deoxy-D-arabino-heptonate; that span reads RNLLN. His274 provides a ligand contact to Zn(2+). His278 serves as the catalytic Proton acceptor; for 3-dehydroquinate synthase activity. Positions 290 and 359 each coordinate 7-phospho-2-dehydro-3-deoxy-D-arabino-heptonate. His290 serves as a coordination point for Zn(2+). The interval 400–837 is EPSP synthase; sequence VGEAPVGDKK…WDVLSGVFNV (438 aa). The active-site For EPSP synthase activity is the Cys819. The interval 858–1049 is shikimate kinase; that stretch reads PSIFIVGMRG…HKDQFTSFLS (192 aa). Residue 864–871 coordinates ATP; the sequence is GMRGAGKT. A 3-dehydroquinase region spans residues 1050 to 1266; the sequence is LTFPDVSIAA…AAPGQLSVEE (217 aa). His1171 functions as the Proton acceptor; for 3-dehydroquinate dehydratase activity in the catalytic mechanism. The Schiff-base intermediate with substrate; for 3-dehydroquinate dehydratase activity role is filled by Lys1200. The tract at residues 1279–1556 is shikimate dehydrogenase; sequence KNLSFFIVGT…EVGEKAVLGN (278 aa).

In the N-terminal section; belongs to the sugar phosphate cyclases superfamily. Dehydroquinate synthase family. The protein in the 2nd section; belongs to the EPSP synthase family. This sequence in the 3rd section; belongs to the shikimate kinase family. It in the 4th section; belongs to the type-I 3-dehydroquinase family. In the C-terminal section; belongs to the shikimate dehydrogenase family. In terms of assembly, homodimer. It depends on Zn(2+) as a cofactor.

The protein localises to the cytoplasm. It catalyses the reaction 7-phospho-2-dehydro-3-deoxy-D-arabino-heptonate = 3-dehydroquinate + phosphate. It carries out the reaction 3-dehydroquinate = 3-dehydroshikimate + H2O. The catalysed reaction is shikimate + NADP(+) = 3-dehydroshikimate + NADPH + H(+). The enzyme catalyses shikimate + ATP = 3-phosphoshikimate + ADP + H(+). It catalyses the reaction 3-phosphoshikimate + phosphoenolpyruvate = 5-O-(1-carboxyvinyl)-3-phosphoshikimate + phosphate. It functions in the pathway metabolic intermediate biosynthesis; chorismate biosynthesis; chorismate from D-erythrose 4-phosphate and phosphoenolpyruvate: step 2/7. It participates in metabolic intermediate biosynthesis; chorismate biosynthesis; chorismate from D-erythrose 4-phosphate and phosphoenolpyruvate: step 3/7. The protein operates within metabolic intermediate biosynthesis; chorismate biosynthesis; chorismate from D-erythrose 4-phosphate and phosphoenolpyruvate: step 4/7. Its pathway is metabolic intermediate biosynthesis; chorismate biosynthesis; chorismate from D-erythrose 4-phosphate and phosphoenolpyruvate: step 5/7. It functions in the pathway metabolic intermediate biosynthesis; chorismate biosynthesis; chorismate from D-erythrose 4-phosphate and phosphoenolpyruvate: step 6/7. Functionally, the AROM polypeptide catalyzes 5 consecutive enzymatic reactions in prechorismate polyaromatic amino acid biosynthesis. This Yarrowia lipolytica (strain CLIB 122 / E 150) (Yeast) protein is Pentafunctional AROM polypeptide.